Consider the following 462-residue polypeptide: TNF receptor-associated factor family protein DDB_G0267754 (462 aa).

The RING-type; degenerate zinc finger occupies 24–62 (CCVCECLLIEALQCRNGHVACKNCFIKIVKSKKECMTCR). The tract at residues 104-127 (KNGNGNEGSSANEIEQPQQPQQQQ) is disordered. 2 TRAF-type zinc fingers span residues 150 to 217 (SHLK…SHTE) and 214 to 273 (SHTE…NQLA). The MATH domain maps to 326-449 (MFRGKWVISN…NDTLTINFSI (124 aa)).

The protein belongs to the TNF receptor-associated factor family. A subfamily.

Its subcellular location is the cytoplasm. In terms of biological role, probable adapter protein and signal transducer that links members of the tumor necrosis factor receptor family to different signaling pathways by association with the receptor cytoplasmic domain and kinases. This chain is TNF receptor-associated factor family protein DDB_G0267754, found in Dictyostelium discoideum (Social amoeba).